Here is a 201-residue protein sequence, read N- to C-terminus: MTTAPTIGVFALQGDVREHLGMLTGLGVEAIAVRRPAELDVCAGLVIPGGESTTMAKLARTFDLFEPIRQRIKEGMPAFGTCAGMIMLADRIEDGTRDQETLGGLDITVRRNAFGRQVESFEGEIDVVGLDAPLHAVFIRAPWVEAVGDSVEVLARVEQGEAAGRIVAVRQGSLMATSFHPEVGGDSRVHRLFVDLVTEER.

An L-glutamine-binding site is contributed by 50 to 52 (GES). The active-site Nucleophile is the C82. Residues R111 and 139-140 (IR) contribute to the L-glutamine site. Catalysis depends on charge relay system residues H180 and E182.

This sequence belongs to the glutaminase PdxT/SNO family. As to quaternary structure, in the presence of PdxS, forms a dodecamer of heterodimers. Only shows activity in the heterodimer.

It catalyses the reaction aldehydo-D-ribose 5-phosphate + D-glyceraldehyde 3-phosphate + L-glutamine = pyridoxal 5'-phosphate + L-glutamate + phosphate + 3 H2O + H(+). It carries out the reaction L-glutamine + H2O = L-glutamate + NH4(+). It participates in cofactor biosynthesis; pyridoxal 5'-phosphate biosynthesis. Catalyzes the hydrolysis of glutamine to glutamate and ammonia as part of the biosynthesis of pyridoxal 5'-phosphate. The resulting ammonia molecule is channeled to the active site of PdxS. The sequence is that of Pyridoxal 5'-phosphate synthase subunit PdxT from Nocardioides sp. (strain ATCC BAA-499 / JS614).